The chain runs to 483 residues: GTPase Der (483 aa).

2 consecutive EngA-type G domains span residues 3-167 (FTLA…GEER) and 212-387 (LRIA…EIWN). Residues 9–16 (GRPNVGKS), 56–60 (DTAGL), 119–122 (NKAE), 218–225 (GRPNAGKS), 265–269 (DTAGM), and 330–333 (NKWD) contribute to the GTP site. One can recognise a KH-like domain in the interval 388–472 (RRISTGRLNR…PIRLSLRTSD (85 aa)).

The protein belongs to the TRAFAC class TrmE-Era-EngA-EngB-Septin-like GTPase superfamily. EngA (Der) GTPase family. As to quaternary structure, associates with the 50S ribosomal subunit.

In terms of biological role, GTPase that plays an essential role in the late steps of ribosome biogenesis. This Brucella suis (strain ATCC 23445 / NCTC 10510) protein is GTPase Der.